Reading from the N-terminus, the 400-residue chain is MIIEPVVKGVVARSAHPFGCQQAVRNQINYVRTADPVTDGPKKVLVLGASSGFGLASRISLAFGGSKADTIGISFERGPSEKGVGTAGWYNNIFFREEAENAGLIGKNFIGDAFTPQMRQQVIDYIKTEFGGQLDLVVYSLATGVRPNPETGELWRSSIKTMGEPVTGPTINIETDTMEQMTIGTATPAEIEDTEKVMGGEDWASWIDTLSEAGVLATGCKTVAYSYVGPKATYSIYHQGTLGRAKAHLHATADQLNDKMSEMGGEAYVSVCKALVTKASVFIPAFSPYILALFKVMKDKGVHEGCIEQMQRLYSQRLYGKNKIVPVDDSRLIRVDDWELEEDIQQQVSELMVKITPENFTTMGDYQGYKADFMQLNGFGLEGVDYQADIDFETLTQLVA.

NAD(+)-binding positions include 48–53, 75–76, 112–113, and 141–142; these read GASSGF, FE, DA, and LA. Tyr227 lines the substrate pocket. The active-site Proton donor is the Tyr237. NAD(+)-binding positions include Lys246 and 275–277; that span reads LVT.

This sequence belongs to the TER reductase family. As to quaternary structure, monomer.

It carries out the reaction a 2,3-saturated acyl-[ACP] + NAD(+) = a (2E)-enoyl-[ACP] + NADH + H(+). Its pathway is lipid metabolism; fatty acid biosynthesis. In terms of biological role, involved in the final reduction of the elongation cycle of fatty acid synthesis (FAS II). Catalyzes the reduction of a carbon-carbon double bond in an enoyl moiety that is covalently linked to an acyl carrier protein (ACP). This Photobacterium profundum (strain SS9) protein is Enoyl-[acyl-carrier-protein] reductase [NADH] 2.